The chain runs to 428 residues: Adenylosuccinate synthetase (428 aa).

GTP-binding positions include 12–18 (GDEGKGK) and 40–42 (GHS). The active-site Proton acceptor is D13. Residues D13 and G40 each coordinate Mg(2+). Residues 13 to 16 (DEGK), 38 to 41 (NAGH), T128, R142, Q223, T238, and R302 each bind IMP. H41 functions as the Proton donor in the catalytic mechanism. Substrate is bound at residue 298–304 (VTTGRPR). Residues R304, 330-332 (KLD), and 412-414 (GTG) contribute to the GTP site.

This sequence belongs to the adenylosuccinate synthetase family. As to quaternary structure, homodimer. Mg(2+) serves as cofactor.

The protein localises to the cytoplasm. The catalysed reaction is IMP + L-aspartate + GTP = N(6)-(1,2-dicarboxyethyl)-AMP + GDP + phosphate + 2 H(+). The protein operates within purine metabolism; AMP biosynthesis via de novo pathway; AMP from IMP: step 1/2. Plays an important role in the de novo pathway of purine nucleotide biosynthesis. Catalyzes the first committed step in the biosynthesis of AMP from IMP. This chain is Adenylosuccinate synthetase, found in Bifidobacterium longum (strain NCC 2705).